The primary structure comprises 46 residues: MQVVNSLRSAKQRHPDCQLVKRKGRLYVICKSNPRFKAVQGRKKRR.

The protein belongs to the bacterial ribosomal protein bL36 family.

The chain is Large ribosomal subunit protein bL36 from Klebsiella pneumoniae (strain 342).